Consider the following 251-residue polypeptide: NADPH-dependent oxidoreductase (251 aa).

It belongs to the flavin oxidoreductase frp family. FMN serves as cofactor.

Its function is as follows. Reduces FMN, organic nitro compounds and disulfide DTNB. Involved in maintenance of the cellular redox state and the disulfide stress response. The protein is NADPH-dependent oxidoreductase (nfrA) of Staphylococcus aureus (strain bovine RF122 / ET3-1).